Here is a 784-residue protein sequence, read N- to C-terminus: Armadillo repeat-containing X-linked protein 2 (784 aa).

Residues 1–6 lie on the Mitochondrial intermembrane side of the membrane; sequence MSRARD. 2 mitochondrion outer membrane (MOM)-targeting sequence regions span residues 1–6 and 26–40; these read MSRARD and KYTR…RLTK. A helical; Signal-anchor membrane pass occupies residues 7–27; it reads AGCVAAGIVIGASAWYCVYKY. Topologically, residues 28–784 are cytoplasmic; that stretch reads TRGKDQKKKR…VKVIKLVNKF (757 aa). 3 disordered regions span residues 328-353, 388-461, and 488-522; these read TSGG…RTAS, HSGA…ELGM, and PESE…TIPM. Over residues 396–418 the composition is skewed to low complexity; that stretch reads GTSGSSKTAATGKKAAPGAHTGA. The span at 488–508 shows a compositional bias: acidic residues; that stretch reads PESEEGESGWTDTESDSDSEP. 3 ARM repeats span residues 528–568, 570–609, and 650–689; these read PYEI…NNAN, SCNQ…NLSE, and ITND…NFAE.

Belongs to the eutherian X-chromosome-specific Armcx family. Widely expressed in the adult nervous tissue, especially in the forebrain, including the cerebral cortex, hippocampus and thalamus.

The protein localises to the mitochondrion. Its subcellular location is the mitochondrion outer membrane. In terms of biological role, may regulate the dynamics and distribution of mitochondria in neural cells. In Mus musculus (Mouse), this protein is Armadillo repeat-containing X-linked protein 2 (Armcx2).